We begin with the raw amino-acid sequence, 1077 residues long: Insulin receptor substrate 2-B (1077 aa).

The disordered stretch occupies residues 1–66; it reads MAGVLCPTEE…APASTAEDDV (66 aa). Short sequence motifs (YXXM motif) lie at residues 33-36 and 147-150; these read YRRM and YFAM. Positions 65–170 constitute a PH domain; it reads DVRKRGYLRK…WYQALSELIN (106 aa). The region spanning 195–299 is the IRS-type PTB domain; the sequence is FKEVWQVNVK…DTMKALKAYS (105 aa). Disordered regions lie at residues 342 to 373, 428 to 464, and 476 to 495; these read ETVVGTPPSAKNNSFRFRTSSEGEGTMTRPFR, VCSSNGHGSASETLTRPSSSSVCGSPSDGGFISSDEY, and VRSNTPDSLGNTPPIQEENT. 2 stretches are compositionally biased toward polar residues: residues 350-364 and 428-444; these read SAKNNSFRFRTSSEG and VCSSNGHGSASETLTRP. A compositionally biased stretch (low complexity) spans 445 to 457; sequence SSSSVCGSPSDGG. Residues 477 to 495 show a composition bias toward polar residues; it reads RSNTPDSLGNTPPIQEENT. The short motif at 499 to 502 is the YXXM motif 3 element; it reads YMSM. Residues 530 to 544 are compositionally biased toward polar residues; it reads KPTNAASQQKSQTAV. A disordered region spans residues 530–571; the sequence is KPTNAASQQKSQTAVSLDEDSEETNKQFAYAESPKLKDSSHV. 6 consecutive short sequence motifs (YXXM motif) follow at residues 595–598, 608–611, 634–637, 666–669, 713–716, and 891–894; these read YMPM, YLPM, YMMM, YMDM, YVPM, and YTTM.

In terms of processing, phosphorylated by INSR.

In terms of biological role, potentiates insulin signaling. The polypeptide is Insulin receptor substrate 2-B (irs2-b) (Xenopus laevis (African clawed frog)).